A 411-amino-acid chain; its full sequence is Argininosuccinate synthase (411 aa).

ATP-binding positions include 13–21 (AYSGGLDTS) and Ala-40. Tyr-91 and Ser-96 together coordinate L-citrulline. Gly-121 provides a ligand contact to ATP. 3 residues coordinate L-aspartate: Thr-123, Asn-127, and Asp-128. Residue Asn-127 participates in L-citrulline binding. Residues Arg-131, Ser-182, Ser-191, Glu-267, and Tyr-279 each contribute to the L-citrulline site.

It belongs to the argininosuccinate synthase family. Type 1 subfamily. In terms of assembly, homotetramer.

It is found in the cytoplasm. The enzyme catalyses L-citrulline + L-aspartate + ATP = 2-(N(omega)-L-arginino)succinate + AMP + diphosphate + H(+). Its pathway is amino-acid biosynthesis; L-arginine biosynthesis; L-arginine from L-ornithine and carbamoyl phosphate: step 2/3. This is Argininosuccinate synthase from Bartonella tribocorum (strain CIP 105476 / IBS 506).